The primary structure comprises 249 residues: uncharacterized protein (249 aa).

Positions 30 to 65 (KVDKLKKLEIKKLEDQKKLKEQEEKHRLTLIRLANA) form a coiled coil. The disordered stretch occupies residues 66–97 (PPQTNSINNNNNNNNNIKTNRPPLIYGEDKDK).

This is an uncharacterized protein from Dictyostelium discoideum (Social amoeba).